The chain runs to 134 residues: UPF0102 protein Dvul_2148 (134 aa).

The protein belongs to the UPF0102 family.

This chain is UPF0102 protein Dvul_2148, found in Nitratidesulfovibrio vulgaris (strain DP4) (Desulfovibrio vulgaris).